The chain runs to 556 residues: Olefin beta-lactone synthetase (556 aa).

Residues 187–195, 321–326, D430, and R445 each bind ATP; these read TSGSTGVPK and TPYGAT.

It belongs to the ATP-dependent AMP-binding enzyme family. In terms of assembly, monomer. Forms a complex with OleB and OleD.

It localises to the cytoplasm. It carries out the reaction a (2R,3S)-2-alkyl-3-hydroxyalkanoate + ATP = a cis-3-alkyl-4-alkyloxetan-2-one + AMP + diphosphate. Functionally, involved in olefin biosynthesis. Catalyzes the conversion of 2-alkyl-3-hydroxyalkanoic acids to beta-lactones in the presence of ATP. In Xanthomonas campestris pv. campestris (strain ATCC 33913 / DSM 3586 / NCPPB 528 / LMG 568 / P 25), this protein is Olefin beta-lactone synthetase.